The sequence spans 271 residues: 3-methyl-2-oxobutanoate hydroxymethyltransferase (271 aa).

Asp53 and Asp92 together coordinate Mg(2+). 3-methyl-2-oxobutanoate contacts are provided by residues 53–54 (DS), Asp92, and Lys120. Glu122 lines the Mg(2+) pocket. Catalysis depends on Glu189, which acts as the Proton acceptor.

The protein belongs to the PanB family. Homodecamer; pentamer of dimers. The cofactor is Mg(2+).

It localises to the cytoplasm. The catalysed reaction is 3-methyl-2-oxobutanoate + (6R)-5,10-methylene-5,6,7,8-tetrahydrofolate + H2O = 2-dehydropantoate + (6S)-5,6,7,8-tetrahydrofolate. It participates in cofactor biosynthesis; (R)-pantothenate biosynthesis; (R)-pantoate from 3-methyl-2-oxobutanoate: step 1/2. Catalyzes the reversible reaction in which hydroxymethyl group from 5,10-methylenetetrahydrofolate is transferred onto alpha-ketoisovalerate to form ketopantoate. This is 3-methyl-2-oxobutanoate hydroxymethyltransferase from Burkholderia multivorans (strain ATCC 17616 / 249).